Reading from the N-terminus, the 329-residue chain is Ribosomal protein L11 methyltransferase (329 aa).

S-adenosyl-L-methionine is bound by residues Thr-177, Gly-198, Asp-220, and Asn-264.

Belongs to the methyltransferase superfamily. PrmA family.

Its subcellular location is the cytoplasm. The enzyme catalyses L-lysyl-[protein] + 3 S-adenosyl-L-methionine = N(6),N(6),N(6)-trimethyl-L-lysyl-[protein] + 3 S-adenosyl-L-homocysteine + 3 H(+). Functionally, methylates ribosomal protein L11. This Helicobacter pylori (strain HPAG1) protein is Ribosomal protein L11 methyltransferase.